Consider the following 1744-residue polypeptide: Transcription initiation factor TFIID subunit 1 (1744 aa).

Disordered regions lie at residues 1 to 65, 248 to 275, 429 to 488, 1001 to 1024, 1071 to 1098, and 1186 to 1213; these read MNNT…EKNE, VSIRSGKPLNYRTPDDLPSTSSGPAPNS, PEDR…DNDP, QNQTLANTDPISTDDDSTDADSDN, TTNQVEKGEKKEEGEVTAEEKKSASQFG, and MKKNEEKAAHKVQKMTEKKVKPIKPPNP. Polar residues predominate over residues 43–52; sequence ACSSASNGGS. A compositionally biased stretch (basic and acidic residues) spans 55–64; that stretch reads VKMEPKVEKN. The segment covering 429–439 has biased composition (basic and acidic residues); that stretch reads PEDRRHDEGPD. The segment covering 440–449 has biased composition (basic residues); it reads HHHHHHHHRK. A compositionally biased stretch (polar residues) spans 477-488; it reads ESTMAQFTDNDP. Residues 1012 to 1024 show a composition bias toward acidic residues; it reads STDDDSTDADSDN. 3 coiled-coil regions span residues 1019–1080, 1161–1204, and 1282–1314; these read DADS…KGEK, YAQM…TEKK, and NFAEIRKEQNREEKLKRKLAKMAEAAVRERQMA. Composition is skewed to basic and acidic residues over residues 1076–1093 and 1186–1205; these read EKGEKKEEGEVTAEEKKS and MKKNEEKAAHKVQKMTEKKV. The segment covering 1319 to 1344 has biased composition (gly residues); that stretch reads YGGGASSSGGAGGGGSGIGGSTGGGI. The interval 1319 to 1391 is disordered; it reads YGGGASSSGG…SKRRSSMMPE (73 aa). Positions 1354 to 1363 are enriched in polar residues; that stretch reads SQISGTSSFL. The segment covering 1372-1381 has biased composition (low complexity); sequence GGNRNSSVSG. The short motif at 1379-1386 is the Nuclear localization signal element; the sequence is VSGSKRRS. Bromo domains follow at residues 1404-1512 and 1537-1634; these read RARA…MIER and YLLG…VKDQ. The span at 1666 to 1694 shows a compositional bias: acidic residues; that stretch reads DHMDEMEDHPTEEEEEDDDDEIMDDDMDI. 2 disordered regions span residues 1666 to 1702 and 1714 to 1744; these read DHMDEMEDHPTEEEEEDDDDEIMDDDMDIDATGYSYD and NDLAMSDSDEDERAEDVKRPANGDDNLLDSF.

This sequence belongs to the TAF1 family. In terms of assembly, component of the TFIID basal transcription factor complex, composed of TATA-box-binding protein tbp-1, and a number of TBP-associated factors (TAFs).

It is found in the nucleus. In terms of biological role, the TFIID basal transcription factor complex plays a major role in the initiation of RNA polymerase II (Pol II)-dependent transcription. TFIID recognizes and binds promoters via its subunit tbp-1, a TATA-box-binding protein, and promotes assembly of the pre-initiation complex (PIC). The TFIID complex consists of tbp-1 and TBP-associated factors (TAFs), including taf-1. May regulate RNA polymerase II activity and thereby may control transcription initiation by RNA polymerase II. Required for early embryonic development. Essential for embryonic transcription of several genes. The polypeptide is Transcription initiation factor TFIID subunit 1 (Caenorhabditis elegans).